A 125-amino-acid chain; its full sequence is Probable growth factor FPV211 (125 aa).

The N-terminal stretch at 1-48 (MKEPLIEVKREYNLIKTLTGKKFVVSTSIVVVLLIINMIFYGIRIHEL) is a signal peptide. The region spanning 80-120 (LFEKCKSKFNNFCIYGECMNIINLDKKFCICNKGYTGNRCD) is the EGF-like domain. Disulfide bonds link cysteine 84-cysteine 97, cysteine 92-cysteine 108, and cysteine 110-cysteine 119.

It localises to the secreted. In Vertebrata (FPV), this protein is Probable growth factor FPV211.